We begin with the raw amino-acid sequence, 172 residues long: Large ribosomal subunit protein uL10 (172 aa).

Belongs to the universal ribosomal protein uL10 family. Part of the ribosomal stalk of the 50S ribosomal subunit. The N-terminus interacts with L11 and the large rRNA to form the base of the stalk. The C-terminus forms an elongated spine to which L12 dimers bind in a sequential fashion forming a multimeric L10(L12)X complex.

Forms part of the ribosomal stalk, playing a central role in the interaction of the ribosome with GTP-bound translation factors. The sequence is that of Large ribosomal subunit protein uL10 from Rhizobium meliloti (strain 1021) (Ensifer meliloti).